Consider the following 358-residue polypeptide: DNA replication and repair protein RecF (358 aa).

Residue 30–37 (GNNGSGKT) participates in ATP binding.

This sequence belongs to the RecF family.

The protein resides in the cytoplasm. The RecF protein is involved in DNA metabolism; it is required for DNA replication and normal SOS inducibility. RecF binds preferentially to single-stranded, linear DNA. It also seems to bind ATP. This is DNA replication and repair protein RecF from Actinobacillus succinogenes (strain ATCC 55618 / DSM 22257 / CCUG 43843 / 130Z).